The sequence spans 185 residues: Large ribosomal subunit protein uL5 (185 aa).

The protein belongs to the universal ribosomal protein uL5 family. Part of the 50S ribosomal subunit; part of the 5S rRNA/L5/L18/L25 subcomplex. Contacts the 5S rRNA and the P site tRNA. Forms a bridge to the 30S subunit in the 70S ribosome.

This is one of the proteins that bind and probably mediate the attachment of the 5S RNA into the large ribosomal subunit, where it forms part of the central protuberance. In the 70S ribosome it contacts protein S13 of the 30S subunit (bridge B1b), connecting the 2 subunits; this bridge is implicated in subunit movement. Contacts the P site tRNA; the 5S rRNA and some of its associated proteins might help stabilize positioning of ribosome-bound tRNAs. This chain is Large ribosomal subunit protein uL5, found in Rhizobium rhizogenes (strain K84 / ATCC BAA-868) (Agrobacterium radiobacter).